The sequence spans 228 residues: MYLLIPAAGMGKRMGSNRNKLLLTLLGKPLLSWTLLAAEASQKIEWVGIIGQPYDFPEFKTILTTISFTKPVELIQGGETRQASVYNGLQALPKAADNVLIHDGARCLVTPDLFDRCAEELLTCQGLIAAISVKDTIKIVDSNQFIKDTPNRSNLWAAQTPQGFKVSLLKQCHEKGYQLGWQVTDDAALFEKCQLPVKIVEGEETNLKVTTPVDLAIAEFILKQRFTH.

Belongs to the IspD/TarI cytidylyltransferase family. IspD subfamily.

It carries out the reaction 2-C-methyl-D-erythritol 4-phosphate + CTP + H(+) = 4-CDP-2-C-methyl-D-erythritol + diphosphate. It functions in the pathway isoprenoid biosynthesis; isopentenyl diphosphate biosynthesis via DXP pathway; isopentenyl diphosphate from 1-deoxy-D-xylulose 5-phosphate: step 2/6. Catalyzes the formation of 4-diphosphocytidyl-2-C-methyl-D-erythritol from CTP and 2-C-methyl-D-erythritol 4-phosphate (MEP). In Crocosphaera subtropica (strain ATCC 51142 / BH68) (Cyanothece sp. (strain ATCC 51142)), this protein is 2-C-methyl-D-erythritol 4-phosphate cytidylyltransferase.